The sequence spans 387 residues: Protoheme IX farnesyltransferase, mitochondrial (387 aa).

Transmembrane regions (helical) follow at residues leucine 95–leucine 115, phenylalanine 117–phenylalanine 137, phenylalanine 183–isoleucine 203, isoleucine 212–alanine 232, proline 242–phenylalanine 262, alanine 284–serine 306, glycine 311–tryptophan 330, and phenylalanine 345–isoleucine 365.

This sequence belongs to the UbiA prenyltransferase family.

The protein localises to the mitochondrion membrane. The enzyme catalyses heme b + (2E,6E)-farnesyl diphosphate + H2O = Fe(II)-heme o + diphosphate. Functionally, converts protoheme IX and farnesyl diphosphate to heme O. The protein is Protoheme IX farnesyltransferase, mitochondrial (cox10) of Schizosaccharomyces pombe (strain 972 / ATCC 24843) (Fission yeast).